The sequence spans 469 residues: Alpha-galactosidase (469 aa).

Residues 1–17 (MFPFFFALFFSSTDVLA) form the signal peptide. Residues Cys41 and Cys73 are joined by a disulfide bond. Residues Asp71 and Asp72 each contribute to the substrate site. The N-linked (GlcNAc...) asparagine glycan is linked to Asn81. Cys120 and Cys150 are oxidised to a cystine. Lys146 contacts substrate. Asp148 serves as the catalytic Nucleophile. N-linked (GlcNAc...) asparagine glycosylation occurs at Asn174. Arg204 is a binding site for substrate. Asp208 functions as the Proton donor in the catalytic mechanism. Intrachain disulfides connect Cys220/Cys236 and Cys222/Cys229. Residue Gln250 participates in substrate binding. 7 N-linked (GlcNAc...) asparagine glycosylation sites follow: Asn269, Asn369, Asn402, Asn412, Asn421, Asn426, and Asn434.

This sequence belongs to the glycosyl hydrolase 27 family. As to quaternary structure, homotetramer.

It localises to the secreted. The catalysed reaction is Hydrolysis of terminal, non-reducing alpha-D-galactose residues in alpha-D-galactosides, including galactose oligosaccharides, galactomannans and galactolipids.. The sequence is that of Alpha-galactosidase (MEL) from Lachancea cidri (Yeast).